A 259-amino-acid chain; its full sequence is Thiazole synthase (259 aa).

The Schiff-base intermediate with DXP role is filled by K100. Residues G161, 187–188 (AG), and 209–210 (AS) each bind 1-deoxy-D-xylulose 5-phosphate.

Belongs to the ThiG family. As to quaternary structure, homotetramer. Forms heterodimers with either ThiH or ThiS.

It localises to the cytoplasm. The enzyme catalyses [ThiS sulfur-carrier protein]-C-terminal-Gly-aminoethanethioate + 2-iminoacetate + 1-deoxy-D-xylulose 5-phosphate = [ThiS sulfur-carrier protein]-C-terminal Gly-Gly + 2-[(2R,5Z)-2-carboxy-4-methylthiazol-5(2H)-ylidene]ethyl phosphate + 2 H2O + H(+). It participates in cofactor biosynthesis; thiamine diphosphate biosynthesis. In terms of biological role, catalyzes the rearrangement of 1-deoxy-D-xylulose 5-phosphate (DXP) to produce the thiazole phosphate moiety of thiamine. Sulfur is provided by the thiocarboxylate moiety of the carrier protein ThiS. In vitro, sulfur can be provided by H(2)S. The chain is Thiazole synthase from Salinispora arenicola (strain CNS-205).